Consider the following 346-residue polypeptide: N(4)-(beta-N-acetylglucosaminyl)-L-asparaginase (346 aa).

The first 23 residues, 1–23 (MERKSNLSLLLLLLVLGMPLVRG), serve as a signal peptide directing secretion. A glycan (N-linked (GlcNAc...) asparagine) is linked at asparagine 38. Cystine bridges form between cysteine 64-cysteine 69 and cysteine 163-cysteine 179. Residue threonine 206 is the Nucleophile of the active site. Residues 234–237 (RVGD) and 257–260 (TGDG) contribute to the substrate site. Cysteine 286 and cysteine 306 are disulfide-bonded. Residue asparagine 310 is glycosylated (N-linked (GlcNAc...) asparagine). Cysteine 317 and cysteine 345 are disulfide-bonded.

Belongs to the Ntn-hydrolase family. In terms of assembly, heterotetramer of two alpha and two beta chains arranged as a dimer of alpha/beta heterodimers. In terms of processing, cleaved into an alpha and beta chain by autocatalysis; this activates the enzyme. The N-terminal residue of the beta subunit is responsible for the nucleophile hydrolase activity. Post-translationally, N-glycosylated.

It localises to the lysosome. The enzyme catalyses N(4)-(beta-N-acetyl-D-glucosaminyl)-L-asparagine + H2O = N-acetyl-beta-D-glucosaminylamine + L-aspartate + H(+). In terms of biological role, cleaves the GlcNAc-Asn bond which joins oligosaccharides to the peptide of asparagine-linked glycoproteins. In Mus musculus (Mouse), this protein is N(4)-(beta-N-acetylglucosaminyl)-L-asparaginase (Aga).